The chain runs to 185 residues: Large ribosomal subunit protein uL22 (185 aa).

The segment at 158 to 185 (AKPREDEPHKKKISKKKLARAKEKMLRE) is disordered. The span at 167–176 (KKKISKKKLA) shows a compositional bias: basic residues.

This sequence belongs to the universal ribosomal protein uL22 family.

The polypeptide is Large ribosomal subunit protein uL22 (RpL17) (Diaphorina citri (Asian citrus psyllid)).